A 222-amino-acid polypeptide reads, in one-letter code: Adenylate kinase (222 aa).

A propeptide (removed in mature form) is located at residue serine 2. 2 positions are modified to N-acetylserine: serine 2 and serine 3. Position 16-21 (16-21) interacts with ATP; that stretch reads GAGKGT. The interval 36–65 is NMP; it reads ATGDMLRSQIAKGTQLGLEAKKIMDQGGLV. AMP-binding positions include threonine 37, arginine 42, 63-65, 92-95, and glutamine 99; these read GLV and GFPR. The tract at residues 133–170 is LID; that stretch reads GRLIHPASGRSYHKIFNPPKEDMKDDVTGEALVQRSDD. ATP contacts are provided by residues arginine 134 and 143-144; that span reads SY. Residues arginine 167 and arginine 178 each coordinate AMP. Glutamine 206 provides a ligand contact to ATP.

This sequence belongs to the adenylate kinase family. AK2 subfamily. Monomer.

It localises to the cytoplasm. It is found in the cytosol. The protein resides in the mitochondrion intermembrane space. It catalyses the reaction AMP + ATP = 2 ADP. Functionally, catalyzes the reversible transfer of the terminal phosphate group between ATP and AMP. Plays an important role in cellular energy homeostasis and in adenine nucleotide metabolism. Adenylate kinase activity is critical for regulation of the phosphate utilization and the AMP de novo biosynthesis pathways. This is Adenylate kinase from Saccharomyces cerevisiae (strain RM11-1a) (Baker's yeast).